Here is a 64-residue protein sequence, read N- to C-terminus: Large ribosomal subunit protein bL28 (64 aa).

Belongs to the bacterial ribosomal protein bL28 family.

In Campylobacter jejuni subsp. doylei (strain ATCC BAA-1458 / RM4099 / 269.97), this protein is Large ribosomal subunit protein bL28.